A 332-amino-acid chain; its full sequence is Anthranilate phosphoribosyltransferase (332 aa).

Residues glycine 79, 82 to 83, serine 87, 89 to 92, 107 to 115, and serine 119 each bind 5-phospho-alpha-D-ribose 1-diphosphate; these read GD, NIST, and KHGNRSVSS. Glycine 79 lines the anthranilate pocket. Serine 91 is a Mg(2+) binding site. Residue asparagine 110 participates in anthranilate binding. Arginine 165 contributes to the anthranilate binding site. Residues aspartate 223 and glutamate 224 each coordinate Mg(2+).

This sequence belongs to the anthranilate phosphoribosyltransferase family. In terms of assembly, homodimer. Requires Mg(2+) as cofactor.

It catalyses the reaction N-(5-phospho-beta-D-ribosyl)anthranilate + diphosphate = 5-phospho-alpha-D-ribose 1-diphosphate + anthranilate. It functions in the pathway amino-acid biosynthesis; L-tryptophan biosynthesis; L-tryptophan from chorismate: step 2/5. In terms of biological role, catalyzes the transfer of the phosphoribosyl group of 5-phosphorylribose-1-pyrophosphate (PRPP) to anthranilate to yield N-(5'-phosphoribosyl)-anthranilate (PRA). The polypeptide is Anthranilate phosphoribosyltransferase (Yersinia pestis bv. Antiqua (strain Antiqua)).